The sequence spans 432 residues: Adenylosuccinate synthetase (432 aa).

GTP is bound by residues 12 to 18 (GDEGKGK) and 40 to 42 (GHT). The Proton acceptor role is filled by Asp-13. Mg(2+)-binding residues include Asp-13 and Gly-40. IMP-binding positions include 13–16 (DEGK), 38–41 (NAGH), Thr-130, Arg-144, Gln-225, Thr-240, and Arg-304. His-41 (proton donor) is an active-site residue. 300 to 306 (ATTGRPR) lines the substrate pocket. GTP is bound by residues Arg-306, 332–334 (KLD), and 414–416 (SVG).

The protein belongs to the adenylosuccinate synthetase family. Homodimer. Mg(2+) serves as cofactor.

The protein resides in the cytoplasm. It carries out the reaction IMP + L-aspartate + GTP = N(6)-(1,2-dicarboxyethyl)-AMP + GDP + phosphate + 2 H(+). It participates in purine metabolism; AMP biosynthesis via de novo pathway; AMP from IMP: step 1/2. Functionally, plays an important role in the de novo pathway of purine nucleotide biosynthesis. Catalyzes the first committed step in the biosynthesis of AMP from IMP. This Anaeromyxobacter sp. (strain K) protein is Adenylosuccinate synthetase.